Here is a 38-residue protein sequence, read N- to C-terminus: Photosystem I reaction center subunit IX (38 aa).

A helical transmembrane segment spans residues 4–24; that stretch reads FLTTAPVFSAIWFTLTAGIMI.

This sequence belongs to the PsaJ family.

The protein resides in the plastid. It is found in the organellar chromatophore thylakoid membrane. May help in the organization of the PsaE and PsaF subunits. This Paulinella chromatophora protein is Photosystem I reaction center subunit IX.